A 75-amino-acid chain; its full sequence is Translational regulator CsrA (75 aa).

This sequence belongs to the CsrA/RsmA family. Homodimer; the beta-strands of each monomer intercalate to form a hydrophobic core, while the alpha-helices form wings that extend away from the core. Interacts with FliW.

Its subcellular location is the cytoplasm. In terms of biological role, a translational regulator that binds mRNA to regulate translation initiation and/or mRNA stability. Usually binds in the 5'-UTR at or near the Shine-Dalgarno sequence preventing ribosome-binding, thus repressing translation. Its function is probably anatagonized by FliW. Inhibits translation of flaA mRNA in vitro. Involved in post-transcriptional regulation of flagellin biosynthesis. The polypeptide is Translational regulator CsrA (Campylobacter jejuni subsp. jejuni serotype O:6 (strain 81116 / NCTC 11828)).